A 1129-amino-acid chain; its full sequence is Protein DWARF 53-LIKE (1129 aa).

The region spanning 8–180 is the Clp R domain; that stretch reads ARQCLSPAAV…KLAILRPAPP (173 aa). Repeat stretches follow at residues 12-85 and 102-180; these read LSPA…LDRL and VSNS…PAPP. Residues 519–573 are disordered; it reads RYIGVPADKERSANPSKGSESIGVQKDVIKPCAVSAVHSSSTARPISSPSVTNKR. Residues 557 to 568 are compositionally biased toward low complexity; sequence SSSTARPISSPS. Positions 577–581 match the EAR 1 motif; it reads LVLNL. The interval 587 to 654 is disordered; that stretch reads KSDENLQERG…KRVEDSERSV (68 aa). A compositionally biased stretch (polar residues) spans 596-608; that stretch reads GMQSQHGTLSNAD. Residues 645-654 show a composition bias toward basic and acidic residues; sequence KRVEDSERSV. 2 short sequence motifs (EAR) span residues 798 to 802 and 975 to 980; these read LDLNL and FDLNLP. Positions 975 to 1001 are disordered; it reads FDLNLPVDEDEPFDADDDSSSHENSYG. Residues 981-992 show a composition bias toward acidic residues; that stretch reads VDEDEPFDADDD.

The protein belongs to the ClpA/ClpB family. In terms of processing, polyubiquitinated. Strigolactone, but not karrikin, triggers rapid SCF(D3)-dependent degradation via the proteasome.

In terms of biological role, repressor of strigolactones (SL) signaling. Subjected to a negative feedback control of SL signaling. The sequence is that of Protein DWARF 53-LIKE from Oryza sativa subsp. japonica (Rice).